The primary structure comprises 863 residues: Bifunctional uridylyltransferase/uridylyl-removing enzyme (863 aa).

Residues 1 to 328 (MLFPLSLSSP…SSNQATVIEQ (328 aa)) form a uridylyltransferase region. Residues 329–687 (LDDDFQLINQ…ISNRFSLGGT (359 aa)) are uridylyl-removing. Residues 446 to 568 (VDEHTLRVML…VQNQVRLDYL (123 aa)) enclose the HD domain. ACT domains lie at 688-772 (EVFI…PNRQ) and 794-863 (EMEL…RNIG).

The protein belongs to the GlnD family. Mg(2+) serves as cofactor.

It catalyses the reaction [protein-PII]-L-tyrosine + UTP = [protein-PII]-uridylyl-L-tyrosine + diphosphate. It carries out the reaction [protein-PII]-uridylyl-L-tyrosine + H2O = [protein-PII]-L-tyrosine + UMP + H(+). With respect to regulation, uridylyltransferase (UTase) activity is inhibited by glutamine, while glutamine activates uridylyl-removing (UR) activity. Functionally, modifies, by uridylylation and deuridylylation, the PII regulatory proteins (GlnB and homologs), in response to the nitrogen status of the cell that GlnD senses through the glutamine level. Under low glutamine levels, catalyzes the conversion of the PII proteins and UTP to PII-UMP and PPi, while under higher glutamine levels, GlnD hydrolyzes PII-UMP to PII and UMP (deuridylylation). Thus, controls uridylylation state and activity of the PII proteins, and plays an important role in the regulation of nitrogen assimilation and metabolism. This is Bifunctional uridylyltransferase/uridylyl-removing enzyme from Haemophilus influenzae (strain PittEE).